The following is a 367-amino-acid chain: 3-dehydroquinate synthase (367 aa).

NAD(+) is bound by residues 111 to 115, 135 to 136, Lys148, Lys157, and 175 to 178; these read GVVGD, TS, and TLDT. Residues Glu190, His254, and His271 each coordinate Zn(2+).

This sequence belongs to the sugar phosphate cyclases superfamily. Dehydroquinate synthase family. Requires Co(2+) as cofactor. Zn(2+) serves as cofactor. It depends on NAD(+) as a cofactor.

Its subcellular location is the cytoplasm. The enzyme catalyses 7-phospho-2-dehydro-3-deoxy-D-arabino-heptonate = 3-dehydroquinate + phosphate. It functions in the pathway metabolic intermediate biosynthesis; chorismate biosynthesis; chorismate from D-erythrose 4-phosphate and phosphoenolpyruvate: step 2/7. In terms of biological role, catalyzes the conversion of 3-deoxy-D-arabino-heptulosonate 7-phosphate (DAHP) to dehydroquinate (DHQ). This is 3-dehydroquinate synthase from Salinibacter ruber (strain DSM 13855 / M31).